A 401-amino-acid chain; its full sequence is Acetylornithine aminotransferase (401 aa).

Pyridoxal 5'-phosphate-binding positions include 121 to 122 (GA) and Phe154. N(2)-acetyl-L-ornithine is bound at residue Arg157. Pyridoxal 5'-phosphate is bound at residue 239-242 (DEVQ). Position 268 is an N6-(pyridoxal phosphate)lysine (Lys268). Residue Ser296 participates in N(2)-acetyl-L-ornithine binding. Position 297 (Thr297) interacts with pyridoxal 5'-phosphate.

The protein belongs to the class-III pyridoxal-phosphate-dependent aminotransferase family. ArgD subfamily. In terms of assembly, homodimer. The cofactor is pyridoxal 5'-phosphate.

The protein localises to the cytoplasm. It carries out the reaction N(2)-acetyl-L-ornithine + 2-oxoglutarate = N-acetyl-L-glutamate 5-semialdehyde + L-glutamate. It participates in amino-acid biosynthesis; L-arginine biosynthesis; N(2)-acetyl-L-ornithine from L-glutamate: step 4/4. The protein is Acetylornithine aminotransferase of Myxococcus xanthus.